Here is a 150-residue protein sequence, read N- to C-terminus: AN1-type zinc finger protein TMC1 (150 aa).

The segment at 1-82 (MSDINEIEIP…TKKTTKKKKK (82 aa)) is disordered. An N-acetylserine modification is found at Ser-2. Positions 23-33 (DPMHEIEDKST) are enriched in basic and acidic residues. Phosphoserine is present on residues Ser-43 and Ser-54. Over residues 53 to 70 (NSRSSSNSSVTSTGQSSR) the composition is skewed to low complexity. A compositionally biased stretch (basic residues) spans 71–82 (RVTKKTTKKKKK). Residues 79-128 (KKKKNACYFDTCSSAASKFIGDCNFCKGHFCSKHRLMENHACNGLTSCKE) form an AN1-type zinc finger. Residues Cys-85, Cys-90, Cys-101, Cys-104, Cys-109, His-112, His-118, and Cys-120 each coordinate Zn(2+).

The protein resides in the nucleus. In terms of biological role, may have a role in protecting cells from metalloid-induced proteotoxicity. This chain is AN1-type zinc finger protein TMC1, found in Saccharomyces cerevisiae (strain ATCC 204508 / S288c) (Baker's yeast).